We begin with the raw amino-acid sequence, 465 residues long: Asparagine--tRNA ligase (465 aa).

Belongs to the class-II aminoacyl-tRNA synthetase family. As to quaternary structure, homodimer.

The protein resides in the cytoplasm. The catalysed reaction is tRNA(Asn) + L-asparagine + ATP = L-asparaginyl-tRNA(Asn) + AMP + diphosphate + H(+). The sequence is that of Asparagine--tRNA ligase from Hahella chejuensis (strain KCTC 2396).